The sequence spans 394 residues: Ceramide glucosyltransferase (394 aa).

Topologically, residues 1 to 10 (MALLDLAQEG) are lumenal. The chain crosses the membrane as a helical span at residues 11–32 (MALFGFVLFVVLWLMHFMSIIY). The Cytoplasmic segment spans residues 33–195 (TRLHLNKKAT…QVYFGTSHPR (163 aa)). A short sequence motif (D1) is located at residue Asp92. Residue Lys117 is modified to N6-acetyllysine. A short sequence motif (D2) is located at residue Asp144. A helical transmembrane segment spans residues 196–215 (SYISANVTGFKCVTGMSCLM). The Lumenal segment spans residues 216–287 (RKDVLDQAGG…KLRINMLPAT (72 aa)). Position 236 (Asp236) is a short sequence motif, D3. Asp236 acts as the Proton acceptor in catalysis. The short motif at 272–276 (RMIRW) is the (Q/R)XXRW element. Residues 288 to 304 (IICEPISECFVASLIIG) form a helical membrane-spanning segment. Over 305-309 (WAAHH) the chain is Cytoplasmic. A helical transmembrane segment spans residues 310-328 (VFRWDIMVFFMCHCLAWFI). Residues 329–348 (FDYIQLRGVQGGTLCFSKLD) lie on the Lumenal side of the membrane. A helical membrane pass occupies residues 349–369 (YAVAWFIRESMTIYIFLSALW). Over 370 to 394 (DPTISWRTGRYRLRCGGTAEEILDV) the chain is Cytoplasmic.

The protein belongs to the glycosyltransferase 2 family. Interacts with RTN1; regulates the ceramide glucosyltransferase activity of UGCG.

It localises to the golgi apparatus membrane. It catalyses the reaction an N-acylsphing-4-enine + UDP-alpha-D-glucose = a beta-D-glucosyl-(1&lt;-&gt;1')-N-acylsphing-4-enine + UDP + H(+). The enzyme catalyses UDP-alpha-D-xylose + an N-acylsphing-4-enine = a beta-D-xylosyl-(1&lt;-&gt;1')-N-acylsphing-4-enine + UDP + H(+). The catalysed reaction is N-(9Z-octadecenoyl)-sphing-4-enine + UDP-alpha-D-xylose = beta-D-xylosyl-(1&lt;-&gt;1')-N-(9Z-octadecenoyl)-sphing-4-enine + UDP + H(+). The protein operates within lipid metabolism; sphingolipid metabolism. Participates in the initial step of the glucosylceramide-based glycosphingolipid/GSL synthetic pathway at the cytosolic surface of the Golgi. Catalyzes the transfer of glucose from UDP-glucose to ceramide to produce glucosylceramide/GlcCer (such as beta-D-glucosyl-(1&lt;-&gt;1')-N-acylsphing-4-enine). Glucosylceramide is the core component of glycosphingolipids/GSLs, amphipathic molecules consisting of a ceramide lipid moiety embedded in the outer leaflet of the membrane, linked to one of hundreds of different externally oriented oligosaccharide structures. Glycosphingolipids are essential components of membrane microdomains that mediate membrane trafficking and signal transduction. They are implicated in many fundamental cellular processes, including growth, differentiation, migration, morphogenesis, cell-to-cell and cell-to-matrix interactions. They are required for instance in the proper development and functioning of the nervous system. As an example of their role in signal transduction, they regulate the leptin receptor/LEPR in the leptin-mediated signaling pathway. They also play an important role in the establishment of the skin barrier regulating keratinocyte differentiation and the proper assembly of the cornified envelope. The biosynthesis of GSLs is also required for the proper intestinal endocytic uptake of nutritional lipids. Catalyzes the synthesis of xylosylceramide/XylCer (such as beta-D-xylosyl-(1&lt;-&gt;1')-N-acylsphing-4-enine) using UDP-Xyl as xylose donor. This is Ceramide glucosyltransferase from Mus musculus (Mouse).